A 341-amino-acid chain; its full sequence is Fructose-1,6-bisphosphatase class 1 1 (341 aa).

Positions 92, 114, 116, and 117 each coordinate Mg(2+). Residues 117-120, N209, and K275 each bind substrate; that span reads DGSS. E281 contributes to the Mg(2+) binding site.

This sequence belongs to the FBPase class 1 family. Homotetramer. Mg(2+) is required as a cofactor.

Its subcellular location is the cytoplasm. It catalyses the reaction beta-D-fructose 1,6-bisphosphate + H2O = beta-D-fructose 6-phosphate + phosphate. It functions in the pathway carbohydrate biosynthesis; gluconeogenesis. This is Fructose-1,6-bisphosphatase class 1 1 from Leptothrix cholodnii (strain ATCC 51168 / LMG 8142 / SP-6) (Leptothrix discophora (strain SP-6)).